The following is a 401-amino-acid chain: Nicotinate phosphoribosyltransferase (401 aa).

Residue H224 is modified to Phosphohistidine; by autocatalysis.

Belongs to the NAPRTase family. In terms of processing, transiently phosphorylated on a His residue during the reaction cycle. Phosphorylation strongly increases the affinity for substrates and increases the rate of nicotinate D-ribonucleotide production. Dephosphorylation regenerates the low-affinity form of the enzyme, leading to product release.

The catalysed reaction is nicotinate + 5-phospho-alpha-D-ribose 1-diphosphate + ATP + H2O = nicotinate beta-D-ribonucleotide + ADP + phosphate + diphosphate. It participates in cofactor biosynthesis; NAD(+) biosynthesis; nicotinate D-ribonucleotide from nicotinate: step 1/1. In terms of biological role, catalyzes the synthesis of beta-nicotinate D-ribonucleotide from nicotinate and 5-phospho-D-ribose 1-phosphate at the expense of ATP. The sequence is that of Nicotinate phosphoribosyltransferase from Pseudomonas putida (strain ATCC 47054 / DSM 6125 / CFBP 8728 / NCIMB 11950 / KT2440).